The sequence spans 373 residues: MLKQESNDIGSGENNRARPCDTCRSNACTVYCHADSAYLCMSCDAQVHSANRVASRHKRVRVCESCERAPAAFLCEADDASLCTACDSEVHSANPLARRHQRVPILPISGNSFSSMTTTHHQSEKTMTDPEKRLVVDQEEGEEGDKDAKEVASWLFPNSDKNNNNQNNGLLFSDEYLNLVDYNSSMDYKFTGEYSQHQQNCSVPQTSYGGDRVVPLKLEESRGHQCHNQQNFQFNIKYGSSGTHYNDNGSINHNAYISSMETGVVPESTACVTTASHPRTPKGTVEQQPDPASQMITVTQLSPMDREARVLRYREKRKTRKFEKTIRYASRKAYAEIRPRVNGRFAKREIEAEEQGFNTMLMYNTGYGIVPSF.

The B box-type 1; atypical zinc-finger motif lies at 15 to 57 (NRARPCDTCRSNACTVYCHADSAYLCMSCDAQVHSANRVASRH). Residues C20, C23, C43, H48, C63, C66, C86, and H91 each coordinate Zn(2+). A B box-type 2; atypical zinc finger spans residues 58–108 (KRVRVCESCERAPAAFLCEADDASLCTACDSEVHSANPLARRHQRVPILPI). Residues 109-120 (SGNSFSSMTTTH) are compositionally biased toward polar residues. The segment at 109 to 130 (SGNSFSSMTTTHHQSEKTMTDP) is disordered. Residues 121 to 130 (HQSEKTMTDP) show a composition bias toward basic and acidic residues. Positions 306–348 (REARVLRYREKRKTRKFEKTIRYASRKAYAEIRPRVNGRFAKR) constitute a CCT domain.

The protein belongs to the CONSTANS family. In terms of assembly, interacts with ADO3, SPA1, SPA2, SPA3 and SPA4. Interacts with MRG1 and MRG2 (via MRG domain). Interacts (via B-box) with MIP1A. Interacts with AS1 to form a functional complex regulating FT expression. Interacts with NFYC9. Component of a red light-dependent nuclear complex made of PHL, PHYB and CO. Interacts directly with PHL in the presence of PHYB. Expressed in leaves, shoots and shoot apical meristem. Detected in the vascular tissue of the hypocotyl, the cotyledons and the leaves. Restricted to the protoxylem and phloem in young inflorescence stems and to the phloem only in older inflorescences. Also detected in the vascular tissue of the root.

It is found in the nucleus. Transcription factor that acts in the long day flowering pathway and may mediate between the circadian clock and the control of flowering. Plays a role in the regulation of flowering time by acting on 'SUPPRESSOR OF OVEREXPRESSION OF CO1', 'TERMINAL FLOWER 1' and 'FLOWERING LOCUS T'. Also regulates P5CS2 and ACS10 (involved in proline and ethylene biosynthesis, respectively). Regulates the expression of NAKR1 by binding to the 5'-TGTG(N2-3)ATG-3' motif. The protein is Zinc finger protein CONSTANS of Arabidopsis thaliana (Mouse-ear cress).